The chain runs to 252 residues: uncharacterized protein (252 aa).

ATP is bound at residue 28–35 (GCDGTGKS).

It to E.coli YghS and YghT.

This is an uncharacterized protein from Escherichia coli O6:H1 (strain CFT073 / ATCC 700928 / UPEC).